The following is a 394-amino-acid chain: Formate-dependent phosphoribosylglycinamide formyltransferase (394 aa).

N(1)-(5-phospho-beta-D-ribosyl)glycinamide is bound by residues 22-23 (EL) and Glu82. ATP is bound by residues Arg114, Lys155, 160 to 165 (SSGKGQ), 195 to 198 (EGFV), and Glu203. In terms of domain architecture, ATP-grasp spans 119 to 308 (RLAAETLKLP…EFALHVRAIL (190 aa)). Glu267 and Glu279 together coordinate Mg(2+). N(1)-(5-phospho-beta-D-ribosyl)glycinamide is bound by residues Asp286, Lys357, and 364–365 (RR).

Belongs to the PurK/PurT family. As to quaternary structure, homodimer.

The catalysed reaction is N(1)-(5-phospho-beta-D-ribosyl)glycinamide + formate + ATP = N(2)-formyl-N(1)-(5-phospho-beta-D-ribosyl)glycinamide + ADP + phosphate + H(+). It functions in the pathway purine metabolism; IMP biosynthesis via de novo pathway; N(2)-formyl-N(1)-(5-phospho-D-ribosyl)glycinamide from N(1)-(5-phospho-D-ribosyl)glycinamide (formate route): step 1/1. In terms of biological role, involved in the de novo purine biosynthesis. Catalyzes the transfer of formate to 5-phospho-ribosyl-glycinamide (GAR), producing 5-phospho-ribosyl-N-formylglycinamide (FGAR). Formate is provided by PurU via hydrolysis of 10-formyl-tetrahydrofolate. In Tolumonas auensis (strain DSM 9187 / NBRC 110442 / TA 4), this protein is Formate-dependent phosphoribosylglycinamide formyltransferase.